We begin with the raw amino-acid sequence, 483 residues long: Glycogen synthase (483 aa).

K15 contacts ADP-alpha-D-glucose.

Belongs to the glycosyltransferase 1 family. Bacterial/plant glycogen synthase subfamily.

It carries out the reaction [(1-&gt;4)-alpha-D-glucosyl](n) + ADP-alpha-D-glucose = [(1-&gt;4)-alpha-D-glucosyl](n+1) + ADP + H(+). The protein operates within glycan biosynthesis; glycogen biosynthesis. Its function is as follows. Synthesizes alpha-1,4-glucan chains using ADP-glucose. The sequence is that of Glycogen synthase from Alkalilimnicola ehrlichii (strain ATCC BAA-1101 / DSM 17681 / MLHE-1).